The chain runs to 340 residues: Mitochondrial glycine transporter (340 aa).

3 Solcar repeats span residues 23-108, 128-218, and 237-325; these read PKTL…ARNG, LSPF…FKND, and RSTI…LIKS. 6 helical membrane-spanning segments follow: residues 29-54, 83-109, 134-159, 193-216, 241-267, and 300-318; these read LISG…TRLQ, GALP…RNGI, LATG…TRYE, GSFA…ELFK, INTS…KTRL, and GLSL…SWCI.

Belongs to the mitochondrial carrier (TC 2.A.29) family. SLC25A38 subfamily.

The protein localises to the mitochondrion inner membrane. It catalyses the reaction glycine(in) = glycine(out). Mitochondrial glycine transporter that imports glycine into the mitochondrial matrix. Plays an important role in providing glycine for the first enzymatic step in heme biosynthesis, the condensation of glycine with succinyl-CoA to produce 5-aminolevulinate (ALA) in the mitochondrial matrix. The sequence is that of Mitochondrial glycine transporter from Debaryomyces hansenii (strain ATCC 36239 / CBS 767 / BCRC 21394 / JCM 1990 / NBRC 0083 / IGC 2968) (Yeast).